The sequence spans 241 residues: Probable porphobilinogen deaminase (241 aa).

Belongs to the HMBS family.

The catalysed reaction is 4 porphobilinogen + H2O = hydroxymethylbilane + 4 NH4(+). The protein operates within porphyrin-containing compound metabolism; protoporphyrin-IX biosynthesis; coproporphyrinogen-III from 5-aminolevulinate: step 2/4. In terms of biological role, tetrapolymerization of the monopyrrole PBG into the hydroxymethylbilane pre-uroporphyrinogen in several discrete steps. This chain is Probable porphobilinogen deaminase (hemC), found in Chlamydia trachomatis serovar D (strain ATCC VR-885 / DSM 19411 / UW-3/Cx).